The sequence spans 142 residues: SLSTKDKETVKAFWSKVSGKTEDIGNDALSRMLVVYPQTKIYFSHWKELTPGSAPVRKHGMTVMKGVGDAVSKIEDLTAGLTELSELHAFTLRVDPGNFKILSHNILVVFAIMFPNDFTPQVHVSMDKFLAALSRALSEKYR.

Serine 1 bears the N-acetylserine mark. Residues 1-142 (SLSTKDKETV…LSRALSEKYR (142 aa)) form the Globin domain. Histidine 59 serves as a coordination point for O2. Histidine 88 serves as a coordination point for heme b.

The protein belongs to the globin family. In terms of assembly, hb2 is a heterotetramer of two alpha-2 chains and two beta chains. In terms of tissue distribution, red blood cells.

Its function is as follows. Involved in oxygen transport from gills to the various peripheral tissues. This chain is Hemoglobin subunit alpha-2 (hba2), found in Trematomus newnesi (Dusky notothen).